A 295-amino-acid polypeptide reads, in one-letter code: Protein PAR32 (295 aa).

Alanine 2 bears the N-acetylalanine mark. Phosphoserine is present on residues serine 36, serine 39, serine 47, serine 123, serine 138, serine 141, and serine 147. Polar residues predominate over residues serine 134–alanine 153. Disordered stretches follow at residues serine 134–valine 156 and threonine 217–asparagine 295. Basic residues predominate over residues threonine 217–glycine 227. Serine 246 bears the Phosphoserine mark. Over residues serine 246–histidine 256 the composition is skewed to polar residues. Residues lysine 265–lysine 274 are compositionally biased toward basic and acidic residues. Residues glutamate 275–serine 284 are compositionally biased toward basic residues. Over residues glycine 285 to asparagine 295 the composition is skewed to low complexity.

Post-translationally, hyperphosphorylated after treatment with rapamycin in a TAP42-dependent manner.

The protein localises to the cytoplasm. In terms of biological role, involved in resistance to cisplatin. This chain is Protein PAR32 (PAR32), found in Saccharomyces cerevisiae (strain ATCC 204508 / S288c) (Baker's yeast).